We begin with the raw amino-acid sequence, 186 residues long: Peptidyl-tRNA hydrolase (186 aa).

TRNA is bound at residue Tyr14. The active-site Proton acceptor is His19. 3 residues coordinate tRNA: Phe64, Asn66, and Asn112.

Belongs to the PTH family. As to quaternary structure, monomer.

The protein localises to the cytoplasm. The catalysed reaction is an N-acyl-L-alpha-aminoacyl-tRNA + H2O = an N-acyl-L-amino acid + a tRNA + H(+). Its function is as follows. Hydrolyzes ribosome-free peptidyl-tRNAs (with 1 or more amino acids incorporated), which drop off the ribosome during protein synthesis, or as a result of ribosome stalling. Functionally, catalyzes the release of premature peptidyl moieties from peptidyl-tRNA molecules trapped in stalled 50S ribosomal subunits, and thus maintains levels of free tRNAs and 50S ribosomes. This is Peptidyl-tRNA hydrolase from Listeria monocytogenes serotype 4a (strain HCC23).